A 343-amino-acid chain; its full sequence is Dihydroorotase (343 aa).

Zn(2+) contacts are provided by His-14 and His-16. Residues 16 to 18 (HVR) and Asn-42 contribute to the substrate site. Residues Lys-99, His-136, and His-174 each coordinate Zn(2+). At Lys-99 the chain carries N6-carboxylysine. His-136 is a substrate binding site. Leu-219 is a substrate binding site. Asp-247 provides a ligand contact to Zn(2+). Residue Asp-247 is part of the active site. Positions 251 and 263 each coordinate substrate.

Belongs to the metallo-dependent hydrolases superfamily. DHOase family. Class II DHOase subfamily. Homodimer. The cofactor is Zn(2+).

It carries out the reaction (S)-dihydroorotate + H2O = N-carbamoyl-L-aspartate + H(+). It participates in pyrimidine metabolism; UMP biosynthesis via de novo pathway; (S)-dihydroorotate from bicarbonate: step 3/3. Functionally, catalyzes the reversible cyclization of carbamoyl aspartate to dihydroorotate. The protein is Dihydroorotase of Variovorax paradoxus (strain S110).